Reading from the N-terminus, the 830-residue chain is Penicillin-binding protein 1A (830 aa).

Positions 1–17 are enriched in basic residues; it reads MTERKREHKDRKQKKNS. Residues 1 to 20 are disordered; that stretch reads MTERKREHKDRKQKKNSPKN. The Cytoplasmic segment spans residues 1–30; the sequence is MTERKREHKDRKQKKNSPKNQSKVTKFLKW. The helical; Signal-anchor for type II membrane protein transmembrane segment at 31–51 threads the bilayer; the sequence is FFIGILLLGITAVTVVGIYVL. Topologically, residues 52–830 are extracellular; sequence SIIRSSPELD…QNGQNNNITQ (779 aa). The tract at residues 72–244 is transglycosylase; it reads SILYDDQGNF…PTSYDGLSEA (173 aa). E111 acts as the Proton donor; for transglycosylase activity in catalysis. Positions 378–663 are transpeptidase; the sequence is ASATIIDYKT…TSPIFGKIMG (286 aa). Catalysis depends on S417, which acts as the Acyl-ester intermediate; for transpeptidase activity. A disordered region spans residues 731 to 830; it reads APDTNDNNNS…QNGQNNNITQ (100 aa). Positions 735 to 746 are enriched in low complexity; that stretch reads NDNNNSGANEGN. Residues 747–758 show a composition bias toward basic and acidic residues; it reads KQQETKPEEVKP. Low complexity-rich tracts occupy residues 759–807 and 816–830; these read NENN…NTNN and GNNQNQNGQNNNITQ.

This sequence in the N-terminal section; belongs to the glycosyltransferase 51 family. The protein in the C-terminal section; belongs to the transpeptidase family.

It localises to the cell membrane. The enzyme catalyses [GlcNAc-(1-&gt;4)-Mur2Ac(oyl-L-Ala-gamma-D-Glu-L-Lys-D-Ala-D-Ala)](n)-di-trans,octa-cis-undecaprenyl diphosphate + beta-D-GlcNAc-(1-&gt;4)-Mur2Ac(oyl-L-Ala-gamma-D-Glu-L-Lys-D-Ala-D-Ala)-di-trans,octa-cis-undecaprenyl diphosphate = [GlcNAc-(1-&gt;4)-Mur2Ac(oyl-L-Ala-gamma-D-Glu-L-Lys-D-Ala-D-Ala)](n+1)-di-trans,octa-cis-undecaprenyl diphosphate + di-trans,octa-cis-undecaprenyl diphosphate + H(+). The catalysed reaction is Preferential cleavage: (Ac)2-L-Lys-D-Ala-|-D-Ala. Also transpeptidation of peptidyl-alanyl moieties that are N-acyl substituents of D-alanine.. It functions in the pathway cell wall biogenesis; peptidoglycan biosynthesis. In terms of biological role, cell wall formation. Synthesis of cross-linked peptidoglycan from the lipid intermediates. The enzyme has a penicillin-insensitive transglycosylase N-terminal domain (formation of linear glycan strands) and a penicillin-sensitive transpeptidase C-terminal domain (cross-linking of the peptide subunits). The chain is Penicillin-binding protein 1A (pbpA) from Clostridium perfringens (strain ATCC 13124 / DSM 756 / JCM 1290 / NCIMB 6125 / NCTC 8237 / Type A).